The sequence spans 574 residues: Pentatricopeptide repeat-containing protein At5g25630 (574 aa).

Basic and acidic residues predominate over residues 1–21 (MEDVNQEKKKVPPMSEPERST). The interval 1-25 (MEDVNQEKKKVPPMSEPERSTPIKT) is disordered. PPR repeat units follow at residues 44–78 (TVRSRTKLMNVLIERGRPHEAQTVFKTLAETGHRP), 79–113 (SLISYTTLLAAMTVQKQYGSISSIVSEVEQSGTKL), 114–148 (DSIFFNAVINAFSESGNMEDAVQALLKMKELGLNP), 149–183 (TTSTYNTLIKGYGIAGKPERSSELLDLMLEEGNVD), 187–221 (NIRTFNVLVQAWCKKKKVEEAWEVVKKMEECGVRP), 222–258 (DTVTYNTIATCYVQKGETVRAESEVVEKMVMKEKAKP), 259–293 (NGRTCGIVVGGYCREGRVRDGLRFVRRMKEMRVEA), 294–328 (NLVVFNSLINGFVEVMDRDGIDEVLTLMKECNVKA), 329–363 (DVITYSTVMNAWSSAGYMEKAAQVFKEMVKAGVKP), 364–394 (DAHAYSILAKGYVRAKEPKKAEELLETLIVE), 398–432 (NVVIFTTVISGWCSNGSMDDAMRVFNKMCKFGVSP), and 433–467 (NIKTFETLMWGYLEVKQPWKAEEVLQMMRGCGVKP).

This sequence belongs to the PPR family. P subfamily.

This Arabidopsis thaliana (Mouse-ear cress) protein is Pentatricopeptide repeat-containing protein At5g25630.